We begin with the raw amino-acid sequence, 391 residues long: GTPase HflX (391 aa).

A disordered region spans residues leucine 162–glutamate 181. Residues lysine 222–lysine 391 enclose the Hflx-type G domain. GTP-binding positions include glycine 228–serine 235, phenylalanine 253–aspartate 257, aspartate 278–glycine 281, asparagine 344–aspartate 347, and serine 369–threonine 371. Mg(2+) is bound by residues serine 235 and threonine 255.

The protein belongs to the TRAFAC class OBG-HflX-like GTPase superfamily. HflX GTPase family. Monomer. Associates with the 50S ribosomal subunit. Mg(2+) serves as cofactor.

It is found in the cytoplasm. Its function is as follows. GTPase that associates with the 50S ribosomal subunit and may have a role during protein synthesis or ribosome biogenesis. This chain is GTPase HflX, found in Treponema denticola (strain ATCC 35405 / DSM 14222 / CIP 103919 / JCM 8153 / KCTC 15104).